The sequence spans 350 residues: GDSL esterase/lipase At2g04570 (350 aa).

A signal peptide spans Met-1–Ala-23. Ser-35 (nucleophile) is an active-site residue. N-linked (GlcNAc...) asparagine glycans are attached at residues Asn-98 and Asn-117. Active-site residues include Asp-325 and His-328. Residue Asn-343 is glycosylated (N-linked (GlcNAc...) asparagine).

Belongs to the 'GDSL' lipolytic enzyme family.

The protein localises to the secreted. The polypeptide is GDSL esterase/lipase At2g04570 (Arabidopsis thaliana (Mouse-ear cress)).